We begin with the raw amino-acid sequence, 185 residues long: Ribosome-recycling factor (185 aa).

Residues 141–160 (RIQKDGEAGEDEVGRAEKEL) form a disordered region.

The protein belongs to the RRF family.

It is found in the cytoplasm. Functionally, responsible for the release of ribosomes from messenger RNA at the termination of protein biosynthesis. May increase the efficiency of translation by recycling ribosomes from one round of translation to another. This chain is Ribosome-recycling factor, found in Rhodococcus jostii (strain RHA1).